Consider the following 113-residue polypeptide: Large ribosomal subunit protein bL19 (113 aa).

Belongs to the bacterial ribosomal protein bL19 family.

In terms of biological role, this protein is located at the 30S-50S ribosomal subunit interface and may play a role in the structure and function of the aminoacyl-tRNA binding site. The protein is Large ribosomal subunit protein bL19 of Carboxydothermus hydrogenoformans (strain ATCC BAA-161 / DSM 6008 / Z-2901).